Here is a 153-residue protein sequence, read N- to C-terminus: ATP synthase subunit b' (153 aa).

The chain crosses the membrane as a helical span at residues 20–40 (TLPLMAVQVVLLTFILNALFF).

Belongs to the ATPase B chain family. In terms of assembly, F-type ATPases have 2 components, F(1) - the catalytic core - and F(0) - the membrane proton channel. F(1) has five subunits: alpha(3), beta(3), gamma(1), delta(1), epsilon(1). F(0) has four main subunits: a(1), b(1), b'(1) and c(10-14). The alpha and beta chains form an alternating ring which encloses part of the gamma chain. F(1) is attached to F(0) by a central stalk formed by the gamma and epsilon chains, while a peripheral stalk is formed by the delta, b and b' chains.

The protein resides in the cellular thylakoid membrane. Its function is as follows. F(1)F(0) ATP synthase produces ATP from ADP in the presence of a proton or sodium gradient. F-type ATPases consist of two structural domains, F(1) containing the extramembraneous catalytic core and F(0) containing the membrane proton channel, linked together by a central stalk and a peripheral stalk. During catalysis, ATP synthesis in the catalytic domain of F(1) is coupled via a rotary mechanism of the central stalk subunits to proton translocation. In terms of biological role, component of the F(0) channel, it forms part of the peripheral stalk, linking F(1) to F(0). The b'-subunit is a diverged and duplicated form of b found in plants and photosynthetic bacteria. This Prochlorococcus marinus (strain NATL1A) protein is ATP synthase subunit b'.